A 231-amino-acid polypeptide reads, in one-letter code: tRNA (guanine-N(1)-)-methyltransferase (231 aa).

An S-adenosyl-L-methionine-binding site is contributed by glycine 112.

Belongs to the RNA methyltransferase TrmD family. In terms of assembly, homodimer.

It is found in the cytoplasm. It catalyses the reaction guanosine(37) in tRNA + S-adenosyl-L-methionine = N(1)-methylguanosine(37) in tRNA + S-adenosyl-L-homocysteine + H(+). In terms of biological role, specifically methylates guanosine-37 in various tRNAs. The protein is tRNA (guanine-N(1)-)-methyltransferase of Chlorobium chlorochromatii (strain CaD3).